A 233-amino-acid chain; its full sequence is Small ribosomal subunit protein uS3 (233 aa).

The KH type-2 domain occupies 39 to 107 (VRQYLKKELA…PAQINISEVR (69 aa)).

This sequence belongs to the universal ribosomal protein uS3 family. Part of the 30S ribosomal subunit. Forms a tight complex with proteins S10 and S14.

Its function is as follows. Binds the lower part of the 30S subunit head. Binds mRNA in the 70S ribosome, positioning it for translation. This chain is Small ribosomal subunit protein uS3, found in Photorhabdus laumondii subsp. laumondii (strain DSM 15139 / CIP 105565 / TT01) (Photorhabdus luminescens subsp. laumondii).